A 172-amino-acid chain; its full sequence is Adenine phosphoribosyltransferase (172 aa).

The protein belongs to the purine/pyrimidine phosphoribosyltransferase family. Homodimer.

The protein localises to the cytoplasm. It carries out the reaction AMP + diphosphate = 5-phospho-alpha-D-ribose 1-diphosphate + adenine. The protein operates within purine metabolism; AMP biosynthesis via salvage pathway; AMP from adenine: step 1/1. In terms of biological role, catalyzes a salvage reaction resulting in the formation of AMP, that is energically less costly than de novo synthesis. In Streptococcus pyogenes serotype M5 (strain Manfredo), this protein is Adenine phosphoribosyltransferase.